The chain runs to 128 residues: Large ribosomal subunit protein bL17 (128 aa).

This sequence belongs to the bacterial ribosomal protein bL17 family. As to quaternary structure, part of the 50S ribosomal subunit. Contacts protein L32.

The polypeptide is Large ribosomal subunit protein bL17 (Glaesserella parasuis serovar 5 (strain SH0165) (Haemophilus parasuis)).